The chain runs to 148 residues: Putative adenylate kinase (148 aa).

ATP contacts are provided by glycine 9, glycine 11, lysine 12, serine 13, and threonine 14. An NMP region spans residues 28–44 (EGNALAVKYGCLSGDEV). An LID region spans residues 91-101 (DRGYSPEKIDE). An ATP-binding site is contributed by arginine 92.

This sequence belongs to the adenylate kinase family. AK6 subfamily. In terms of assembly, interacts with uS11. Not a structural component of 40S pre-ribosomes, but transiently interacts with them by binding to uS11.

The enzyme catalyses AMP + ATP = 2 ADP. It catalyses the reaction ATP + H2O = ADP + phosphate + H(+). Functionally, broad-specificity nucleoside monophosphate (NMP) kinase that catalyzes the reversible transfer of the terminal phosphate group between nucleoside triphosphates and monophosphates. Also has ATPase activity. Involved in the late maturation steps of the 30S ribosomal particles, specifically 16S rRNA maturation. While NMP activity is not required for ribosome maturation, ATPase activity is. Associates transiently with small ribosomal subunit protein uS11. ATP hydrolysis breaks the interaction with uS11. May temporarily remove uS11 from the ribosome to enable a conformational change of the ribosomal RNA that is needed for the final maturation step of the small ribosomal subunit. The protein is Putative adenylate kinase of Thermoplasma acidophilum (strain ATCC 25905 / DSM 1728 / JCM 9062 / NBRC 15155 / AMRC-C165).